Here is a 676-residue protein sequence, read N- to C-terminus: Methionine--tRNA ligase (676 aa).

The short motif at 15-25 is the 'HIGH' region element; it reads PYANGPIHLGH. 4 residues coordinate Zn(2+): Cys146, Cys149, Cys159, and Cys162. The 'KMSKS' region motif lies at 332 to 336; it reads KMSKS. Lys335 serves as a coordination point for ATP. Positions 575–676 constitute a tRNA-binding domain; it reads DFAKIDLRIA…EGAQPGMRVK (102 aa).

This sequence belongs to the class-I aminoacyl-tRNA synthetase family. MetG type 1 subfamily. In terms of assembly, homodimer. It depends on Zn(2+) as a cofactor.

It is found in the cytoplasm. It carries out the reaction tRNA(Met) + L-methionine + ATP = L-methionyl-tRNA(Met) + AMP + diphosphate. Its function is as follows. Is required not only for elongation of protein synthesis but also for the initiation of all mRNA translation through initiator tRNA(fMet) aminoacylation. The sequence is that of Methionine--tRNA ligase from Shewanella sp. (strain ANA-3).